We begin with the raw amino-acid sequence, 127 residues long: C-C motif chemokine 28 (127 aa).

Residues Met1–Ala19 form the signal peptide. Intrachain disulfides connect Cys30–Cys58 and Cys31–Cys73. Asn78 carries N-linked (GlcNAc...) asparagine glycosylation. A compositionally biased stretch (basic residues) spans Lys92–Gln115. Residues Lys92–Tyr127 form a disordered region. A compositionally biased stretch (basic and acidic residues) spans Gly116–Tyr127.

It belongs to the intercrine beta (chemokine CC) family. As to expression, preferentially expressed by epithelial cells of diverse tissues including normal and pathological colon, salivary gland, mammary gland, trachea and rectum. Also found in prostate, spleen, thyroid, psoriasis skin and in lower levels in peripheral blood leukocytes, small intestine, Peyer patches, stomach and normal skin.

Its subcellular location is the secreted. Chemotactic activity for resting CD4, CD8 T-cells and eosinophils. Binds to CCR3 and CCR10 and induces calcium mobilization in a dose-dependent manner. In Homo sapiens (Human), this protein is C-C motif chemokine 28 (CCL28).